Here is a 116-residue protein sequence, read N- to C-terminus: UPF0102 protein PERMA_0362 (116 aa).

It belongs to the UPF0102 family.

This is UPF0102 protein PERMA_0362 from Persephonella marina (strain DSM 14350 / EX-H1).